The sequence spans 159 residues: Ribosomal RNA large subunit methyltransferase H (159 aa).

Residues Leu76, Gly107, and 126–131 (ISSLTL) each bind S-adenosyl-L-methionine.

This sequence belongs to the RNA methyltransferase RlmH family. In terms of assembly, homodimer.

It localises to the cytoplasm. It catalyses the reaction pseudouridine(1915) in 23S rRNA + S-adenosyl-L-methionine = N(3)-methylpseudouridine(1915) in 23S rRNA + S-adenosyl-L-homocysteine + H(+). Specifically methylates the pseudouridine at position 1915 (m3Psi1915) in 23S rRNA. The chain is Ribosomal RNA large subunit methyltransferase H from Cupriavidus metallidurans (strain ATCC 43123 / DSM 2839 / NBRC 102507 / CH34) (Ralstonia metallidurans).